The following is a 160-amino-acid chain: Non-secretory ribonuclease (160 aa).

The signal sequence occupies residues M1 to A27. W34 carries a C-linked (Man) tryptophan glycan. H42 serves as the catalytic Proton acceptor. An N-linked (GlcNAc...) asparagine glycan is attached at N44. Cystine bridges form between C50–C110, C64–C122, C82–C137, and C89–C98. At Y60 the chain carries 3'-nitrotyrosine. K65–T69 contacts substrate. 3 N-linked (GlcNAc...) asparagine glycosylation sites follow: N92, N111, and N138. The active-site Proton donor is H155.

The protein belongs to the pancreatic ribonuclease family. In terms of assembly, interacts with and forms a tight 1:1 complex with RNH1. Dimerization of two such complexes may occur.

It localises to the lysosome. It is found in the cytoplasmic granule. It carries out the reaction an [RNA] containing cytidine + H2O = an [RNA]-3'-cytidine-3'-phosphate + a 5'-hydroxy-ribonucleotide-3'-[RNA].. It catalyses the reaction an [RNA] containing uridine + H2O = an [RNA]-3'-uridine-3'-phosphate + a 5'-hydroxy-ribonucleotide-3'-[RNA].. In terms of biological role, this is a non-secretory ribonuclease. It is a pyrimidine specific nuclease with a slight preference for U. Cytotoxin and helminthotoxin. Possesses a wide variety of biological activities. The polypeptide is Non-secretory ribonuclease (RNASE2) (Macaca fascicularis (Crab-eating macaque)).